The primary structure comprises 94 residues: Serine protease inhibitor Kazal-type 13 (94 aa).

A signal peptide spans 1-23 (MAAFPHKIIFFLVCSTLTHVAFS). The region spanning 33 to 94 (RWPKPRCKMY…IKFEKYGKCD (62 aa)) is the Kazal-like domain. Cystine bridges form between cysteine 39–cysteine 75, cysteine 53–cysteine 72, and cysteine 61–cysteine 93. Asparagine 55 is a glycosylation site (N-linked (GlcNAc...) asparagine).

It is found in the secreted. In terms of biological role, may be a serine protease inhibitor. Essential for sperm maturation and fertility. Inhibits sperm acrosome reaction, protecting sperm from premature reaction. The polypeptide is Serine protease inhibitor Kazal-type 13 (SPINK13) (Homo sapiens (Human)).